The sequence spans 261 residues: Putative [LysW]-aminoadipate/[LysW]-glutamate kinase (261 aa).

Substrate-binding positions include 35–36, Arg62, and Asn162; that span reads GG.

It belongs to the acetylglutamate kinase family. LysZ subfamily.

The protein localises to the cytoplasm. It catalyses the reaction [amino-group carrier protein]-C-terminal-N-(1,4-dicarboxybutan-1-yl)-L-glutamine + ATP = [amino-group carrier protein]-C-terminal-N-(1-carboxy-5-phosphooxy-5-oxopentan-1-yl)-L-glutamine + ADP. The enzyme catalyses [amino-group carrier protein]-C-terminal-gamma-(L-glutamyl)-L-glutamate + ATP = [amino-group carrier protein]-C-terminal-gamma-(5-phospho-L-glutamyl)-L-glutamate + ADP. The protein operates within amino-acid biosynthesis; L-lysine biosynthesis via AAA pathway; L-lysine from L-alpha-aminoadipate (Thermus route): step 2/5. It participates in amino-acid biosynthesis; L-arginine biosynthesis. Its function is as follows. Involved in both the arginine and lysine biosynthetic pathways. Phosphorylates the LysW-bound precursors glutamate (for arginine biosynthesis), respectively alpha-aminoadipate (for lysine biosynthesis). The chain is Putative [LysW]-aminoadipate/[LysW]-glutamate kinase from Pyrobaculum aerophilum (strain ATCC 51768 / DSM 7523 / JCM 9630 / CIP 104966 / NBRC 100827 / IM2).